We begin with the raw amino-acid sequence, 745 residues long: Photosystem I P700 chlorophyll a apoprotein A2 (745 aa).

Helical transmembrane passes span 49-72 (LFATHFGHLAIIFLWASGNVFHIA), 138-161 (LYAGAIGLLLLAAVFLFAGWLHLQ), 178-202 (LNHHLAGLFGVSSLAWAGHLVHVAI), 276-294 (MAHHHLAIAVIFIVAGHMY), 338-361 (LHFQLALALACLGVVTSLVAQHMY), 377-403 (AALYTHHQYIAGFLMVGAFAHGAIFLV), 425-447 (AIISHLSWVSLFLGFHTLGLYVH), and 528-546 (FLVHHAIALGLHTTTLILV). Positions 570 and 579 each coordinate [4Fe-4S] cluster. A run of 2 helical transmembrane segments spans residues 586-607 (AFYLAMFWMLNTIGWVTFYWHW) and 654-676 (LAVWAWMFLFGHLVWATGFMFLI). Positions 665, 673, and 681 each coordinate chlorophyll a. Tryptophan 682 contributes to the phylloquinone binding site. The chain crosses the membrane as a helical span at residues 718–738 (LVGLAHFTVGYVLTYAAFVIA).

Belongs to the PsaA/PsaB family. The PsaA/B heterodimer binds the P700 chlorophyll special pair and subsequent electron acceptors. PSI consists of a core antenna complex that captures photons, and an electron transfer chain that converts photonic excitation into a charge separation. The cyanobacterial PSI reaction center is composed of one copy each of PsaA,B,C,D,E,F,I,J,K,L,M and X, and forms trimeric complexes. Requires PSI electron transfer chain: 5 chlorophyll a, 1 chlorophyll a', 2 phylloquinones and 3 4Fe-4S clusters. PSI core antenna: 90 chlorophyll a, 22 carotenoids, 3 phospholipids and 1 galactolipid. P700 is a chlorophyll a/chlorophyll a' dimer, A0 is one or more chlorophyll a, A1 is one or both phylloquinones and FX is a shared 4Fe-4S iron-sulfur center. as cofactor.

It localises to the cellular thylakoid membrane. The catalysed reaction is reduced [plastocyanin] + hnu + oxidized [2Fe-2S]-[ferredoxin] = oxidized [plastocyanin] + reduced [2Fe-2S]-[ferredoxin]. PsaA and PsaB bind P700, the primary electron donor of photosystem I (PSI), as well as the electron acceptors A0, A1 and FX. PSI is a plastocyanin/cytochrome c6-ferredoxin oxidoreductase, converting photonic excitation into a charge separation, which transfers an electron from the donor P700 chlorophyll pair to the spectroscopically characterized acceptors A0, A1, FX, FA and FB in turn. Oxidized P700 is reduced on the lumenal side of the thylakoid membrane by plastocyanin or cytochrome c6. The polypeptide is Photosystem I P700 chlorophyll a apoprotein A2 (Synechococcus sp. (strain JA-3-3Ab) (Cyanobacteria bacterium Yellowstone A-Prime)).